Consider the following 166-residue polypeptide: MVNFEKNINELQEKLISVNRVSKTVKGGRIFSFTALTVVGDCQGKIGFGYGKSKEVPLAIQKAMDKARKNMIIIPIVCKTLQHEINGYHTGSRVFMKPASEGTGIIAGGAMRAVLEVAGVHNVLAKVYGSTNPINVVRATVNALKKMRFPMHIAEKRGKSIDDILG.

The region spanning 11–74 is the S5 DRBM domain; that stretch reads LQEKLISVNR…DKARKNMIII (64 aa).

Belongs to the universal ribosomal protein uS5 family. Part of the 30S ribosomal subunit. Contacts proteins S4 and S8.

Its function is as follows. With S4 and S12 plays an important role in translational accuracy. In terms of biological role, located at the back of the 30S subunit body where it stabilizes the conformation of the head with respect to the body. The polypeptide is Small ribosomal subunit protein uS5 (Wigglesworthia glossinidia brevipalpis).